Reading from the N-terminus, the 633-residue chain is Chaperone protein HtpG (633 aa).

Residues Met1–Arg341 form an a; substrate-binding region. The tract at residues Glu342–Arg562 is b. Residues Leu563–Ala633 are c.

Belongs to the heat shock protein 90 family. As to quaternary structure, homodimer.

It is found in the cytoplasm. In terms of biological role, molecular chaperone. Has ATPase activity. This chain is Chaperone protein HtpG, found in Cupriavidus taiwanensis (strain DSM 17343 / BCRC 17206 / CCUG 44338 / CIP 107171 / LMG 19424 / R1) (Ralstonia taiwanensis (strain LMG 19424)).